We begin with the raw amino-acid sequence, 123 residues long: Chondroitin proteoglycan 8 (123 aa).

A signal peptide spans M1–A16. A disordered region spans residues S32–E123. Positions R38–T60 are enriched in basic and acidic residues. Residues S63 and S65 are each glycosylated (O-linked (Xyl...) (chondroitin sulfate) serine). The span at E74–E84 shows a compositional bias: basic and acidic residues. O-linked (Xyl...) (chondroitin sulfate) serine glycosylation is found at S87, S93, and S114.

This is Chondroitin proteoglycan 8 (cpg-8) from Caenorhabditis briggsae.